Reading from the N-terminus, the 714-residue chain is Fatty acid oxidation complex subunit alpha (714 aa).

Residues 1 to 190 (MEMTSAFTLN…KLGLVDDVVP (190 aa)) form an enoyl-CoA hydratase region. The interval 306–714 (APLNSVGILG…FWKTTATDLQ (409 aa)) is 3-hydroxyacyl-CoA dehydrogenase.

In the N-terminal section; belongs to the enoyl-CoA hydratase/isomerase family. It in the central section; belongs to the 3-hydroxyacyl-CoA dehydrogenase family. Heterotetramer of two alpha chains (FadJ) and two beta chains (FadI).

Its subcellular location is the cytoplasm. It carries out the reaction a (3S)-3-hydroxyacyl-CoA = a (2E)-enoyl-CoA + H2O. It catalyses the reaction a 4-saturated-(3S)-3-hydroxyacyl-CoA = a (3E)-enoyl-CoA + H2O. The catalysed reaction is a (3S)-3-hydroxyacyl-CoA + NAD(+) = a 3-oxoacyl-CoA + NADH + H(+). The enzyme catalyses (3S)-3-hydroxybutanoyl-CoA = (3R)-3-hydroxybutanoyl-CoA. It participates in lipid metabolism; fatty acid beta-oxidation. Functionally, catalyzes the formation of a hydroxyacyl-CoA by addition of water on enoyl-CoA. Also exhibits 3-hydroxyacyl-CoA epimerase and 3-hydroxyacyl-CoA dehydrogenase activities. The polypeptide is Fatty acid oxidation complex subunit alpha (Escherichia coli (strain 55989 / EAEC)).